Here is a 466-residue protein sequence, read N- to C-terminus: Cysteine--tRNA ligase (466 aa).

Cys-28 contacts Zn(2+). The 'HIGH' region signature appears at 30-40 (PTVYNYIHIGN). Zn(2+) contacts are provided by Cys-208, His-233, and Glu-237. The 'KMSKS' region motif lies at 265-269 (KMSKS). Lys-268 is an ATP binding site.

This sequence belongs to the class-I aminoacyl-tRNA synthetase family. In terms of assembly, monomer. Zn(2+) is required as a cofactor.

The protein localises to the cytoplasm. The enzyme catalyses tRNA(Cys) + L-cysteine + ATP = L-cysteinyl-tRNA(Cys) + AMP + diphosphate. The protein is Cysteine--tRNA ligase of Staphylococcus aureus (strain MRSA252).